A 215-amino-acid polypeptide reads, in one-letter code: 24 kDa Ras-like protein (215 aa).

GTP is bound at residue 17 to 24 (GGGGVGKS). Residues 39 to 47 (YDPTIEDSY) carry the Effector region motif. Residues 64-68 (DTAGQ) and 123-126 (NKCD) each bind GTP. The disordered stretch occupies residues 179–199 (QTGRPAIAAGGGGPAGSYTQD). Cys212 is subject to Cysteine methyl ester. Residue Cys212 is the site of S-farnesyl cysteine attachment. The propeptide at 213–215 (VIA) is removed in mature form.

This sequence belongs to the small GTPase superfamily. Ras family.

The protein resides in the cell membrane. The catalysed reaction is GTP + H2O = GDP + phosphate + H(+). Functionally, ras proteins bind GDP/GTP and possess intrinsic GTPase activity. In Coprinopsis cinerea (strain Okayama-7 / 130 / ATCC MYA-4618 / FGSC 9003) (Inky cap fungus), this protein is 24 kDa Ras-like protein (CC-RAS).